Here is a 397-residue protein sequence, read N- to C-terminus: Subtilisin-like protease 3 (397 aa).

The first 19 residues, 1-19 (MGCIKVISVFLAAIAAVDA), serve as a signal peptide directing secretion. Residues 20 to 116 (RAFFHNRGGN…VEHDRVVKLA (97 aa)) constitute a propeptide that is removed on maturation. Residues 35–116 (SYIVVMKDGV…VEHDRVVKLA (82 aa)) form the Inhibitor I9 domain. The 272-residue stretch at 126–397 (TWGLGRVSHK…NRLLYNGSGR (272 aa)) folds into the Peptidase S8 domain. Active-site charge relay system residues include D158 and H189. N250 is a glycosylation site (N-linked (GlcNAc...) asparagine). S344 acts as the Charge relay system in catalysis. N393 carries an N-linked (GlcNAc...) asparagine glycan.

The protein belongs to the peptidase S8 family.

It localises to the secreted. Functionally, secreted subtilisin-like serine protease with keratinolytic activity that contributes to pathogenicity. The chain is Subtilisin-like protease 3 (SUB3) from Arthroderma benhamiae (strain ATCC MYA-4681 / CBS 112371) (Trichophyton mentagrophytes).